Reading from the N-terminus, the 306-residue chain is MSNWLVDKLIPSIMRSEVKKSSVPEGLWHKCPSCEAVLYRPELEKTLDVCPKCNHHMRIGARARLNIFLDVEGREELGADLEPVDRLKFRDGKKYKDRLTAAQKQTGEKDALISMSGTLLGMPVVASAFEFSFMGGSMGAIVGERFVRAANYALENRCPFVCFAASGGARMQEALISLMQMAKTSAVLARLREEGLPFISVLTDPVYGGVSASLAMLGDVIVAEPKALIGFAGPRVIEQTVREKLPEGFQRSEFLLDHGAIDMIVSRSELRPRLGNLLAQMMNLPTPRFVAPVIEPIVVPPAPATI.

The 270-residue stretch at 27 to 296 (LWHKCPSCEA…PRFVAPVIEP (270 aa)) folds into the CoA carboxyltransferase N-terminal domain. 4 residues coordinate Zn(2+): cysteine 31, cysteine 34, cysteine 50, and cysteine 53. A C4-type zinc finger spans residues 31–53 (CPSCEAVLYRPELEKTLDVCPKC).

Belongs to the AccD/PCCB family. As to quaternary structure, acetyl-CoA carboxylase is a heterohexamer composed of biotin carboxyl carrier protein (AccB), biotin carboxylase (AccC) and two subunits each of ACCase subunit alpha (AccA) and ACCase subunit beta (AccD). Requires Zn(2+) as cofactor.

It localises to the cytoplasm. The catalysed reaction is N(6)-carboxybiotinyl-L-lysyl-[protein] + acetyl-CoA = N(6)-biotinyl-L-lysyl-[protein] + malonyl-CoA. It participates in lipid metabolism; malonyl-CoA biosynthesis; malonyl-CoA from acetyl-CoA: step 1/1. Component of the acetyl coenzyme A carboxylase (ACC) complex. Biotin carboxylase (BC) catalyzes the carboxylation of biotin on its carrier protein (BCCP) and then the CO(2) group is transferred by the transcarboxylase to acetyl-CoA to form malonyl-CoA. This Pseudomonas syringae pv. syringae (strain B728a) protein is Acetyl-coenzyme A carboxylase carboxyl transferase subunit beta.